A 435-amino-acid chain; its full sequence is Gamma-glutamyl phosphate reductase (435 aa).

Belongs to the gamma-glutamyl phosphate reductase family.

The protein resides in the cytoplasm. It carries out the reaction L-glutamate 5-semialdehyde + phosphate + NADP(+) = L-glutamyl 5-phosphate + NADPH + H(+). The protein operates within amino-acid biosynthesis; L-proline biosynthesis; L-glutamate 5-semialdehyde from L-glutamate: step 2/2. In terms of biological role, catalyzes the NADPH-dependent reduction of L-glutamate 5-phosphate into L-glutamate 5-semialdehyde and phosphate. The product spontaneously undergoes cyclization to form 1-pyrroline-5-carboxylate. The chain is Gamma-glutamyl phosphate reductase from Xylella fastidiosa (strain M12).